Here is a 2867-residue protein sequence, read N- to C-terminus: MEKNVLWVIFYNFLVILLASCNDSNRSKSNSLKSESKSLPTYANLMRNGQDKYNNAKTEDNIGNQINNDNNHNGYNDNRINSEYPKTSHLQHSPSLVHLNDHKFTTKPSRHSYVQRNSIYKRNTNNNMENTNNELHVVPNFFIQEKKAAPQKPSVQNTPTATQIVYNNLDYLNAFDDTNNIISAFKPHHPIIYYFKQLEHFANSYYDLRNKIKDYFALPMKQASDVVEKNVKDCLQNINESRILMTQLENPQNYNDISDKYDEKVKEYKKKIEDMQICLKDSYIKNFKAIMSANLKMNLALNGIYIHWWYLTCSTKTYDDIVKEYAIEINDFDEKKSISFMDNMKKIHKSAIDTLKKMKAELNTSLDSKRTEFIIGEIGHMIEKFNLHLTKIRYASAFIKSIPLQKVESDIYRVELKTLFYVAAKHYADFKFSLEHLKMFENLSKSKEKMLYSTFEKLEGDLLNKINTLMGSEQSTSDLTSIIADSEKIIKSAESLINSSSEEIAKYALDSNEKINEIKKNYDQNILKVREFINKSNGLITSVKGTSQLSESDKQQIETKIEEIKKKKKDILERGKEFINIMNEIKKKKKSNSSNSSTNSKEFTDKLKELETEFEGLNKTVKGYLQEIEDIKVKENEDRSLKNQIEQHLKYTSDNRDNVKTLISKNDEIQKYIEKIEKLINDAPSGKDKFTTEKTNLQNKVKKIIDEFHKEDLQLLLNSLSKFYEEHQKLYNEASTIEKIKDLHQKTKEEYEKLEKMKFSNFGQILDKLNTELDNLKTLEKNIVEEQTNYINKVMSDSLTNLTAEVDNLRSALDGYRADETELKTYKNRINERKEKFLSTLKEQEDDIPDGKNIYEEYNNHKNVMVNKEHKISSDINQCNENIIKAEKNLETFNTLVQTLDAHTGKKDQKVHDLLQKFKTNLEKLNLNELESGFKSLNGSASTTNKQIENIRKNIDTIKSLNFAKNSSESSKLSLENIIKNKADLIKKLDQHTQEIEKHTFIENEEMSPLLSVIKKEKNRVESDMSEELIKQLNTKINAILEYYNKSKDRFNGDDETNLEELDDFKKQCQDAQQEIKKLTTNYNVLDNGINVIIKEQHEKVIILSENHITEKDKKINEKIQQNVNSLNEMKTKLGLLKINEDIKNSRDTTIKSKIQEFEKKVQTIFGSIDVANKKIDAIKKEHDVNKDEFDKEKVKDTSFDEKKKSIEKAYEKMGNTLKELEKMDDEKNIEKEVEEAQIQYKRIFIDHDVNLMNDEVEKSKIVMEKIELYKKEIDEIKQKTNEYKQGDTSNFYYTEQYNSATQSKAKIEQFINIATTKKGTSDTSQDINELESIKEEVHKNLQLVKQESNSMEEMRKQILSMKDLLILNNSETIAKEISNNTQNALGFRENAKTKLNKTDELLQRVAAMIEEAKAHKNNIDIALEDAQIDTEVSKIEQINREIMNKKDEIKSYLSEIKEYKDKCTTEISNSKRGKDKIEFLEKFKPNEESNSNKVNINEINENIRNSEQYLKDIEDAEKQASTKVELFHKHETTISNIFKESEILGVETKSQKKINKAEDIMKEIERHNSEIQTQVKGFQENLNKLNEPHNYDNAEDELNNDKSTNAKVLIETNLESVKHNLSEITNIKQGGEKIYSKAKDIMQKIKATSENTAEKTLEKVKDDQSNYVNYLNQITTERNLIVTEKNRLNGIDSTITNIEGALKESKGNYEIGFLEKLEEIGKNRKLKVDITKKSINSTVGNFSSLFNNFDLNQYDFNKNINDYENKMGEIYNEFEGSLNKISENLRNASENTSDYNSAKTLRLEAQKEKVNLLNKEEEANKYLRDVKKVESFRFIFNMKESLDKINEMIKKEQLTVNEGHGNVKQLVENIKELVDENNLSDILKQATGKNEEIQKITHSTLKNKAKTILGHVDTSAKYVGIKITPELALTELLGDAKLKTAQELKFESKNNVVLETENMSKNTNELDVHKNIQDAYKVALEILAHSDEIDTKQKDSSKLIEMGNQIYLKVVLINQYKNKISSIKSKEEAVSVKIGNVSKKHSELSKITCSDKSYDNIIALEKQTELQNLRNSFTQEKTNTNSDSKLEKIKTDFESLKNALKTLEGEVNALKASSDNHEHVQSKSEPVNPALSEIEKEETDIDSLNTALDELLKKGRTCEVSRYKLIKDTVTKEISDDTELINTIEKNVKAYLAYIKKNYEDTVQDVLTLNEHFNTKQVSNHEPTNFDKSNKSSEELTKAVTDSKTIISKLKGVIIEVNENTEMNTIESSAKEIEALYNELKNKKTSLNEIYQTSNEVKLQEMKSNADKYIDVSKIFNTVLDTQKSNIVTNQHSINNVKDKLKGKLQELIDADSSFTLESIKKFNEIYSHIKTNIGELEQLQQTNKSEHDNVAKHKEKIVHLINRVESLKGDVKNHDDDQYMKKLNASLLNDNIKNTNSINISDEELKKLLKKVEENDQLCKNNNTQNFISDIMKRVEDLNRRFTENLPEKEKLHQIENNYNEISSIFSEINLQDVDEFVAKIHKQIDAEKASVNNVREAEKIRTAIQNVTSYDTEIISRLSEMNNVLERITTRKTKMDQLLKSLSPDNTSLNLNARTHVRKSEDIIKQLNSHIGEITELNTYAHEVMTYLENELNKLLKQLEIERAKLETKTSPSGMKAKEEKVPPKETENRAQDNLASVPQKTLEDNTQQMPENSVQDNLASVPQKTLEDNTHQMPENRVQEDSISAPQEQVEYSTLAVPENDETTEEESEHDDAHDDTHDDTHDDTHDDTHDDTHDDTHDDTHDESQTGRDSTAKEAIGKTRLAGAVIIAMSVLSGFIIIVFKDKDEEEKDHNEHGYNEAFGEHDEYNMHDKEEVIEVCFNEED.

The N-terminal stretch at 1–21 (MEKNVLWVIFYNFLVILLASC) is a signal peptide. Topologically, residues 22–2805 (NDSNRSKSNS…TAKEAIGKTR (2784 aa)) are extracellular. Disordered stretches follow at residues 52–73 (KYNNAKTEDNIGNQINNDNNHN), 2650–2682 (ETKTSPSGMKAKEEKVPPKETENRAQDNLASVP), and 2712–2799 (DNTH…TAKE). Positions 61-73 (NIGNQINNDNNHN) are enriched in low complexity. Residues 2659 to 2674 (KAKEEKVPPKETENRA) show a composition bias toward basic and acidic residues. Polar residues predominate over residues 2725 to 2736 (DSISAPQEQVEY). A compositionally biased stretch (acidic residues) spans 2743–2754 (ENDETTEEESEH). Positions 2755–2799 (DDAHDDTHDDTHDDTHDDTHDDTHDDTHDDTHDESQTGRDSTAKE) are enriched in basic and acidic residues. A run of 7 repeats spans residues 2758–2761 (HDDT), 2762–2765 (HDDT), 2766–2769 (HDDT), 2770–2773 (HDDT), 2774–2777 (HDDT), 2778–2781 (HDDT), and 2782–2785 (HDDT). The 7 X 4 AA tandem repeats of H-D-D-T stretch occupies residues 2758–2785 (HDDTHDDTHDDTHDDTHDDTHDDTHDDT). A helical transmembrane segment spans residues 2806–2826 (LAGAVIIAMSVLSGFIIIVFK). The Cytoplasmic segment spans residues 2827–2867 (DKDEEEKDHNEHGYNEAFGEHDEYNMHDKEEVIEVCFNEED).

The protein resides in the cell membrane. Functionally, involved in reticulocyte adhesion. Specifically binds to human reticulocyte cells. In Plasmodium vivax (strain Belem), this protein is Reticulocyte-binding protein 2 (RBP-2).